The sequence spans 232 residues: 2,3-bisphosphoglycerate-dependent phosphoglycerate mutase (232 aa).

Substrate is bound by residues 10–17 (RHGESQWN), 23–24 (TG), Arg-62, 89–92 (ERHY), Lys-100, 116–117 (RR), and 186–187 (GN). The active-site Tele-phosphohistidine intermediate is His-11. Glu-89 functions as the Proton donor/acceptor in the catalytic mechanism.

Belongs to the phosphoglycerate mutase family. BPG-dependent PGAM subfamily. Homodimer.

The catalysed reaction is (2R)-2-phosphoglycerate = (2R)-3-phosphoglycerate. The protein operates within carbohydrate degradation; glycolysis; pyruvate from D-glyceraldehyde 3-phosphate: step 3/5. Functionally, catalyzes the interconversion of 2-phosphoglycerate and 3-phosphoglycerate. This is 2,3-bisphosphoglycerate-dependent phosphoglycerate mutase from Blochmanniella pennsylvanica (strain BPEN).